Reading from the N-terminus, the 465-residue chain is Innexin-11 (465 aa).

4 helical membrane-spanning segments follow: residues L29–G49, Q105–W125, S195–A215, and I286–V306. Residues I433–I465 form a disordered region.

It belongs to the pannexin family.

Its subcellular location is the cell membrane. The protein resides in the cell junction. It localises to the gap junction. Its function is as follows. Structural component of the gap junctions. The chain is Innexin-11 (inx-11) from Caenorhabditis elegans.